We begin with the raw amino-acid sequence, 261 residues long: Putative ketoacyl reductase (261 aa).

12 residues coordinate NADP(+): Thr-15, Ser-16, Ile-18, Arg-38, Gly-39, Asp-63, Val-64, Asn-90, Tyr-157, Lys-161, Val-190, and Thr-192. The Proton acceptor role is filled by Tyr-157.

Belongs to the short-chain dehydrogenases/reductases (SDR) family. In terms of assembly, homotetramer.

The protein operates within antibiotic biosynthesis; actinorhodin biosynthesis. In Streptomyces coelicolor (strain ATCC BAA-471 / A3(2) / M145), this protein is Putative ketoacyl reductase (actIII).